We begin with the raw amino-acid sequence, 483 residues long: Regulatory protein ViaA (483 aa).

This sequence belongs to the ViaA family. As to quaternary structure, homodimer. Interacts with RavA.

Its subcellular location is the cytoplasm. Functionally, component of the RavA-ViaA chaperone complex, which may act on the membrane to optimize the function of some of the respiratory chains. ViaA stimulates the ATPase activity of RavA. The sequence is that of Regulatory protein ViaA from Cronobacter sakazakii (strain ATCC BAA-894) (Enterobacter sakazakii).